Here is a 119-residue protein sequence, read N- to C-terminus: Endocuticle structural glycoprotein SgAbd-3 (119 aa).

Residue Q1 is modified to Pyrrolidone carboxylic acid. Residues 24–98 (DGSYRYSFET…PQGAHLPTPP (75 aa)) enclose the Chitin-binding type R&amp;R domain. Residues 33-55 (TSDGQRASQEGALKQVSAPGPDG) are disordered. O-linked (HexNAc...) threonine glycosylation occurs at T96.

In terms of biological role, component of the abdominal endocuticle. This is Endocuticle structural glycoprotein SgAbd-3 from Schistocerca gregaria (Desert locust).